A 460-amino-acid polypeptide reads, in one-letter code: tRNA modification GTPase MnmE (460 aa).

3 residues coordinate (6S)-5-formyl-5,6,7,8-tetrahydrofolate: R23, E86, and R126. One can recognise a TrmE-type G domain in the interval 222–381 (GLSTAIIGRP…LEAAIASLFF (160 aa)). N232 is a K(+) binding site. GTP-binding positions include 232–237 (NVGKSS), 251–257 (TDIAGTT), and 276–279 (DTAG). S236 is a Mg(2+) binding site. Residues T251, I253, and T256 each contribute to the K(+) site. T257 serves as a coordination point for Mg(2+). Residue K460 participates in (6S)-5-formyl-5,6,7,8-tetrahydrofolate binding.

This sequence belongs to the TRAFAC class TrmE-Era-EngA-EngB-Septin-like GTPase superfamily. TrmE GTPase family. As to quaternary structure, homodimer. Heterotetramer of two MnmE and two MnmG subunits. K(+) is required as a cofactor.

The protein localises to the cytoplasm. Its function is as follows. Exhibits a very high intrinsic GTPase hydrolysis rate. Involved in the addition of a carboxymethylaminomethyl (cmnm) group at the wobble position (U34) of certain tRNAs, forming tRNA-cmnm(5)s(2)U34. The protein is tRNA modification GTPase MnmE of Exiguobacterium sibiricum (strain DSM 17290 / CCUG 55495 / CIP 109462 / JCM 13490 / 255-15).